We begin with the raw amino-acid sequence, 445 residues long: RING finger and transmembrane domain-containing protein 2 (445 aa).

Topologically, residues 1–183 (MWLLAAHQVL…LLAKLCFQHK (183 aa)) are extracellular. Residues 12 to 41 (KMQRRHSSNTDNIPPERSRSQALSPEASVD) are disordered. A helical transmembrane segment spans residues 184-203 (LGIAVCIGMASTFAYANSTL). Over 204–215 (REQVSLKEKRSV) the chain is Cytoplasmic. Residues 216 to 236 (LVILWILAFLAGNTMYVLYTF) traverse the membrane as a helical segment. Over 237-256 (SSQQLYSSLIFLKPNLETLD) the chain is Extracellular. A helical transmembrane segment spans residues 257–277 (FFDLLWIVGIADFVLKYITIA). The Cytoplasmic portion of the chain corresponds to 278–330 (LKCLIVALPKIILAVKSKGKFYLVIEELSQLFRSLVPIQLWYKYIMGDDSSNS). A helical transmembrane segment spans residues 331–351 (YFLGGVLIVLYSLCKSFDICG). At 352 to 445 (RVGGLRKALK…GATSAHLQVY (94 aa)) the chain is on the extracellular side. An RING-type zinc finger spans residues 385 to 423 (CAICQAEFRDPMILLCQHVFCEECLCLWLDRERTCPLCR).

Its subcellular location is the membrane. Functionally, E3 ubiquitin-protein ligase that negatively regulates IL3-dependent cellular responses through IL3RA ubiquitination and degradation by the proteasome, having an anti-inflammatory effect. The polypeptide is RING finger and transmembrane domain-containing protein 2 (Rnft2) (Mus musculus (Mouse)).